Reading from the N-terminus, the 495-residue chain is UDP-N-acetylmuramate--L-alanine ligase (495 aa).

120-126 (GSHGKTT) serves as a coordination point for ATP.

Belongs to the MurCDEF family.

It localises to the cytoplasm. The enzyme catalyses UDP-N-acetyl-alpha-D-muramate + L-alanine + ATP = UDP-N-acetyl-alpha-D-muramoyl-L-alanine + ADP + phosphate + H(+). It participates in cell wall biogenesis; peptidoglycan biosynthesis. Its function is as follows. Cell wall formation. The sequence is that of UDP-N-acetylmuramate--L-alanine ligase from Rickettsia prowazekii (strain Madrid E).